The following is a 124-amino-acid chain: Fluoride-specific ion channel FluC 2 (124 aa).

A run of 4 helical transmembrane segments spans residues 1-21 (MNFLLAGIGASIGAMLRYAIT), 36-58 (SNLPTPTLFINLTGAFILGFIFG), 63-85 (VFIYAIVGTGVLGGYTTFSTMNT), and 104-124 (LSSYLGGLILVFVGYYLAILF). Na(+)-binding residues include Gly75 and Thr78.

The protein belongs to the fluoride channel Fluc/FEX (TC 1.A.43) family. As to quaternary structure, heterodimer composed of FluC1 and FluC2. Neither FluC1 nor FluC2 alone catalyzes fluoride efflux from liposomes.

It localises to the cell membrane. The enzyme catalyses fluoride(in) = fluoride(out). Na(+) is not transported, but it plays an essential structural role and its presence is essential for fluoride channel function. In terms of biological role, fluoride-specific ion channel. Important for reducing fluoride concentration in the cell, thus reducing its toxicity. The chain is Fluoride-specific ion channel FluC 2 from Lactobacillus acidophilus (strain ATCC 700396 / NCK56 / N2 / NCFM).